The chain runs to 440 residues: 3-phosphoshikimate 1-carboxyvinyltransferase (440 aa).

3 residues coordinate 3-phosphoshikimate: Lys-25, Ser-26, and Arg-30. Lys-25 contributes to the phosphoenolpyruvate binding site. Phosphoenolpyruvate contacts are provided by Gly-96 and Arg-124. Ser-168, Gln-169, Asp-310, and Lys-337 together coordinate 3-phosphoshikimate. Gln-169 serves as a coordination point for phosphoenolpyruvate. The active-site Proton acceptor is Asp-310. Residues Arg-341, Arg-382, and Lys-409 each coordinate phosphoenolpyruvate.

It belongs to the EPSP synthase family. As to quaternary structure, monomer.

It localises to the cytoplasm. The enzyme catalyses 3-phosphoshikimate + phosphoenolpyruvate = 5-O-(1-carboxyvinyl)-3-phosphoshikimate + phosphate. It participates in metabolic intermediate biosynthesis; chorismate biosynthesis; chorismate from D-erythrose 4-phosphate and phosphoenolpyruvate: step 6/7. Functionally, catalyzes the transfer of the enolpyruvyl moiety of phosphoenolpyruvate (PEP) to the 5-hydroxyl of shikimate-3-phosphate (S3P) to produce enolpyruvyl shikimate-3-phosphate and inorganic phosphate. The chain is 3-phosphoshikimate 1-carboxyvinyltransferase from Chlamydia trachomatis serovar L2 (strain ATCC VR-902B / DSM 19102 / 434/Bu).